An 830-amino-acid polypeptide reads, in one-letter code: MLAPDSLVLDGRFRVLRPLGSGGMGEVYLGEQVSLGRKVAIKVLHHDLHAQAGMAERFKREARLLSAVEHPAVVRIVDFGESGDHACLVMEFVEGESLYDVLTPGPMPPGRALPLLQQLAEGLAAIHDKGIIHRDLKPENVFISKSARGEQARLLDFGIARLVEPDAASSVSQIGVVLGTPEYLSPEQAVGAKVDTRSDLYSFGVLTYRVLSGRLPFDGPLPRNFLSQHASAAPLPLDRAAPTLSRYVGLLSLVMRLLEKDASKRPQSAHELADALAAAHSALSAFTPGLGTPAYVPQPGSGATPSSGTSVFGTGSASGSSSGPTGTAAFAGVAPAPQASSGTAAFGVASSSGSASGALPAASPHTGTASFGLKSSGGVAAVTGGNASVVKPQNLTVMLTDIQGFTERTSRQTHEENARMLETHDKLLMPLVKEHDGRLVQKRGDALLVVFRSPTAGVLCGMAMQDRLWRHNQTVPEVDRLNVRVCLHAGEVLATPDSVLGEPMEVIEAVEHVASAGEVTFTEAVNLARNRAEATAEPCGAITLPGRNEQLQLYRCQRAAEGPPFGDRFASQGSRGNALAPLLAKLQAVKLPTGLGELLRQRRREAALVAGAVVLLGAGAAWLSQRNDAGTRAFALLEDGKLNEALALMDAATDEEKELPSLRRARVAANHAKGHHISERTALSHLKEEELEDVEPLILDGLAEDYGKEPLTVLGNALARFPKDRLRAHYEDLAEEAYSLRQWGALRYLEFVKAADGVNLVRAYSEALNSPDCDIRTQAANRLAGLGDADAIPAMERVTSLPKAKGLLGSKDCGHEAAATAIKSLKQKSD.

Over 1 to 605 (MLAPDSLVLD…GELLRQRRRE (605 aa)) the chain is Cytoplasmic. The 271-residue stretch at 13–283 (FRVLRPLGSG…DALAAAHSAL (271 aa)) folds into the Protein kinase domain. ATP-binding positions include 19–27 (LGSGGMGEV) and Lys42. The active-site Proton acceptor is Asp135. Residues 296-326 (VPQPGSGATPSSGTSVFGTGSASGSSSGPTG) are disordered. A compositionally biased stretch (low complexity) spans 299–326 (PGSGATPSSGTSVFGTGSASGSSSGPTG). Positions 396–511 (TVMLTDIQGF…EPMEVIEAVE (116 aa)) constitute a Guanylate cyclase domain. The helical transmembrane segment at 606–623 (AALVAGAVVLLGAGAAWL) threads the bilayer. Residues 624–830 (SQRNDAGTRA…AIKSLKQKSD (207 aa)) are Periplasmic-facing.

This sequence belongs to the protein kinase superfamily. Ser/Thr protein kinase family.

Its subcellular location is the cell membrane. It carries out the reaction L-seryl-[protein] + ATP = O-phospho-L-seryl-[protein] + ADP + H(+). The catalysed reaction is L-threonyl-[protein] + ATP = O-phospho-L-threonyl-[protein] + ADP + H(+). Its function is as follows. Regulates the activity of endogenous beta-lactamase or related enzymes, by blocking their secretion by phosphorylation, in response to an external signal yet to be identified. The sequence is that of Serine/threonine-protein kinase pkn2 (pkn2) from Myxococcus xanthus.